Here is a 158-residue protein sequence, read N- to C-terminus: Small ribosomal subunit protein uS9 (158 aa).

The protein belongs to the universal ribosomal protein uS9 family.

The sequence is that of Small ribosomal subunit protein uS9 from Brucella anthropi (strain ATCC 49188 / DSM 6882 / CCUG 24695 / JCM 21032 / LMG 3331 / NBRC 15819 / NCTC 12168 / Alc 37) (Ochrobactrum anthropi).